The primary structure comprises 432 residues: Repulsive guidance molecule A (432 aa).

The N-terminal stretch at 1–29 (MGRGAGSTALGLFQILPVFLCIFPPVTSP) is a signal peptide. Positions 30–149 (CKILKCNSEF…NYTHCGLFGD (120 aa)) are cleaved as a propeptide — removed in mature form. Asn-96 carries N-linked (GlcNAc...) asparagine glycosylation. Residues 99–122 (KDGPTSQPRLRTLPPGDSQERSDS) form a disordered region. 2 disulfides stabilise this stretch: Cys-126–Cys-207 and Cys-144–Cys-296. The N-linked (GlcNAc...) asparagine glycan is linked to Asn-140. The GPI-anchor amidated asparagine moiety is linked to residue Asn-404. Residues 405-432 (AAPSEHPWALPALWVALLSLSQCWLGLL) constitute a propeptide, removed in mature form.

This sequence belongs to the repulsive guidance molecule (RGM) family. In terms of processing, autocatalytically cleaved at low pH; the two chains remain linked via two disulfide bonds.

It localises to the cell membrane. Its function is as follows. Acts as an axon-specific repulsive guidance molecule in the retinotectal system. Repulsive for a subset of axons of the temporal half of the retina. Provides thus positional information for the temporal axons invading the optic tectum in the stratum opticum. This Gallus gallus (Chicken) protein is Repulsive guidance molecule A (RGMA).